The following is a 792-amino-acid chain: Protein SEY1 homolog 2 (792 aa).

Residues 1–638 are Cytoplasmic-facing; sequence MEQIITGDGA…NIKAQANREQ (638 aa). The GB1/RHD3-type G domain maps to 28–245; the sequence is GVDYHTVAII…LKDYLFAEKS (218 aa). Position 38 to 45 (38 to 45) interacts with GTP; the sequence is GPQSSGKS. The helical transmembrane segment at 639 to 659 threads the bilayer; it reads IPGWAWLATFLCSSNYIMKLL. Residues 660–662 lie on the Lumenal side of the membrane; it reads ANP. Residues 663–683 traverse the membrane as a helical segment; the sequence is IFFALAVIIGGIYSILRMLGL. Residues 684–792 are Cytoplasmic-facing; it reads QDVAKKTLLD…LTRTQSLEFM (109 aa). Positions 691–718 form a coiled coil; that stretch reads LLDKFNSLLKNLTKDENEQEKEGEENEE. The segment at 703–792 is disordered; that stretch reads TKDENEQEKE…LTRTQSLEFM (90 aa). The span at 707–723 shows a compositional bias: acidic residues; the sequence is NEQEKEGEENEEPEEDQ. Polar residues-rich tracts occupy residues 739–751 and 764–774; these read SVSQEFSQKSIYK and IPQTSPLGNND.

It belongs to the TRAFAC class dynamin-like GTPase superfamily. GB1/RHD3 GTPase family. RHD3 subfamily.

It is found in the endoplasmic reticulum membrane. Functionally, probable GTP-binding protein that may be involved in cell development. This chain is Protein SEY1 homolog 2, found in Trichomonas vaginalis (strain ATCC PRA-98 / G3).